The chain runs to 363 residues: Dihydroorotate dehydrogenase (quinone) (363 aa).

Residues 77–81 and Thr-101 each bind FMN; that span reads AGMDK. A substrate-binding site is contributed by Lys-81. Position 126–130 (126–130) interacts with substrate; the sequence is NRMGF. Residues Ser-155 and Asn-188 each contribute to the FMN site. A substrate-binding site is contributed by Asn-188. Catalysis depends on Ser-191, which acts as the Nucleophile. Residue Asn-193 coordinates substrate. FMN contacts are provided by Lys-234 and Thr-262. Residue 263-264 participates in substrate binding; that stretch reads NT. FMN is bound by residues Gly-287, Gly-316, and 337 to 338; that span reads YT.

The protein belongs to the dihydroorotate dehydrogenase family. Type 2 subfamily. As to quaternary structure, monomer. It depends on FMN as a cofactor.

It localises to the cell membrane. The catalysed reaction is (S)-dihydroorotate + a quinone = orotate + a quinol. It participates in pyrimidine metabolism; UMP biosynthesis via de novo pathway; orotate from (S)-dihydroorotate (quinone route): step 1/1. Catalyzes the conversion of dihydroorotate to orotate with quinone as electron acceptor. This Chloroflexus aurantiacus (strain ATCC 29366 / DSM 635 / J-10-fl) protein is Dihydroorotate dehydrogenase (quinone).